The following is a 296-amino-acid chain: Probable lipid kinase YegS-like (296 aa).

A DAGKc domain is found at 1 to 130 (MPHTLLILNG…IDLAQVNDKH (130 aa)). Residues Thr-37, 63-69 (GDGTINE), and Thr-92 contribute to the ATP site. Mg(2+) is bound by residues Leu-212, Asp-215, and Leu-217. The active-site Proton acceptor is the Glu-268.

The protein belongs to the diacylglycerol/lipid kinase family. YegS lipid kinase subfamily. Mg(2+) is required as a cofactor. The cofactor is Ca(2+).

Its subcellular location is the cytoplasm. Functionally, probably phosphorylates lipids; the in vivo substrate is unknown. In Yersinia enterocolitica serotype O:8 / biotype 1B (strain NCTC 13174 / 8081), this protein is Probable lipid kinase YegS-like.